Here is a 248-residue protein sequence, read N- to C-terminus: 5'-nucleotidase SurE (248 aa).

Positions 8, 9, 39, and 91 each coordinate a divalent metal cation.

Belongs to the SurE nucleotidase family. The cofactor is a divalent metal cation.

It is found in the cytoplasm. The enzyme catalyses a ribonucleoside 5'-phosphate + H2O = a ribonucleoside + phosphate. Its function is as follows. Nucleotidase that shows phosphatase activity on nucleoside 5'-monophosphates. The sequence is that of 5'-nucleotidase SurE from Shewanella amazonensis (strain ATCC BAA-1098 / SB2B).